A 216-amino-acid chain; its full sequence is Uracil phosphoribosyltransferase (216 aa).

Residues R85, R110, and 135–143 (DPMVATGYS) each bind 5-phospho-alpha-D-ribose 1-diphosphate. Uracil contacts are provided by residues I200 and 205-207 (GDA). D206 serves as a coordination point for 5-phospho-alpha-D-ribose 1-diphosphate.

It belongs to the UPRTase family. Mg(2+) serves as cofactor.

It carries out the reaction UMP + diphosphate = 5-phospho-alpha-D-ribose 1-diphosphate + uracil. The protein operates within pyrimidine metabolism; UMP biosynthesis via salvage pathway; UMP from uracil: step 1/1. Allosterically activated by GTP. Functionally, catalyzes the conversion of uracil and 5-phospho-alpha-D-ribose 1-diphosphate (PRPP) to UMP and diphosphate. This Burkholderia ambifaria (strain ATCC BAA-244 / DSM 16087 / CCUG 44356 / LMG 19182 / AMMD) (Burkholderia cepacia (strain AMMD)) protein is Uracil phosphoribosyltransferase.